A 306-amino-acid polypeptide reads, in one-letter code: Pantothenate kinase (306 aa).

91-98 (GSVAVGKS) is a binding site for ATP.

The protein belongs to the prokaryotic pantothenate kinase family.

It localises to the cytoplasm. It carries out the reaction (R)-pantothenate + ATP = (R)-4'-phosphopantothenate + ADP + H(+). Its pathway is cofactor biosynthesis; coenzyme A biosynthesis; CoA from (R)-pantothenate: step 1/5. The protein is Pantothenate kinase of Streptococcus equi subsp. zooepidemicus (strain H70).